The primary structure comprises 321 residues: Lipoyl synthase (321 aa).

Positions 68, 73, 79, 94, 98, 101, and 308 each coordinate [4Fe-4S] cluster. The 218-residue stretch at 80–297 (FNHGTATFMI…KAEALAMGFT (218 aa)) folds into the Radical SAM core domain.

It belongs to the radical SAM superfamily. Lipoyl synthase family. The cofactor is [4Fe-4S] cluster.

Its subcellular location is the cytoplasm. It catalyses the reaction [[Fe-S] cluster scaffold protein carrying a second [4Fe-4S](2+) cluster] + N(6)-octanoyl-L-lysyl-[protein] + 2 oxidized [2Fe-2S]-[ferredoxin] + 2 S-adenosyl-L-methionine + 4 H(+) = [[Fe-S] cluster scaffold protein] + N(6)-[(R)-dihydrolipoyl]-L-lysyl-[protein] + 4 Fe(3+) + 2 hydrogen sulfide + 2 5'-deoxyadenosine + 2 L-methionine + 2 reduced [2Fe-2S]-[ferredoxin]. The protein operates within protein modification; protein lipoylation via endogenous pathway; protein N(6)-(lipoyl)lysine from octanoyl-[acyl-carrier-protein]: step 2/2. Functionally, catalyzes the radical-mediated insertion of two sulfur atoms into the C-6 and C-8 positions of the octanoyl moiety bound to the lipoyl domains of lipoate-dependent enzymes, thereby converting the octanoylated domains into lipoylated derivatives. This Escherichia fergusonii (strain ATCC 35469 / DSM 13698 / CCUG 18766 / IAM 14443 / JCM 21226 / LMG 7866 / NBRC 102419 / NCTC 12128 / CDC 0568-73) protein is Lipoyl synthase.